We begin with the raw amino-acid sequence, 163 residues long: Thiol peroxidase (163 aa).

A Thioredoxin domain is found at 16-162 (LQVGDTAHDF…YDAAIAAVKS (147 aa)). C58 (cysteine sulfenic acid (-SOH) intermediate) is an active-site residue. A disulfide bridge links C58 with C92.

It belongs to the peroxiredoxin family. Tpx subfamily. Homodimer.

The catalysed reaction is a hydroperoxide + [thioredoxin]-dithiol = an alcohol + [thioredoxin]-disulfide + H2O. Its function is as follows. Thiol-specific peroxidase that catalyzes the reduction of hydrogen peroxide and organic hydroperoxides to water and alcohols, respectively. Plays a role in cell protection against oxidative stress by detoxifying peroxides. In Streptococcus sanguinis, this protein is Thiol peroxidase.